The following is a 251-amino-acid chain: MLLIPAIDLKDGQCVRLKQGDMDQATIFSEDPAAMARKWVDLGARRLHLVDLNGAFAGKPKNLEAIEAILDEVGDEIPVQLGGGIRSLETIEKYLDAGLSYVIIGTAAVKDPGFLQDACTAFAGSIIVGLDAKDGKVATDGWSKLTGHEVIDLAQKFEDYGVESIVYTDIGRDGMLQGINIEATVKLAQAVGIPVIASGGLSNLVDIENLCEVEEQGVEGVICGRAIYSGDLDFAAAQKRADELNGELDNA.

Asp-8 serves as the catalytic Proton acceptor. Residue Asp-131 is the Proton donor of the active site.

It belongs to the HisA/HisF family.

The protein localises to the cytoplasm. It carries out the reaction 1-(5-phospho-beta-D-ribosyl)-5-[(5-phospho-beta-D-ribosylamino)methylideneamino]imidazole-4-carboxamide = 5-[(5-phospho-1-deoxy-D-ribulos-1-ylimino)methylamino]-1-(5-phospho-beta-D-ribosyl)imidazole-4-carboxamide. It participates in amino-acid biosynthesis; L-histidine biosynthesis; L-histidine from 5-phospho-alpha-D-ribose 1-diphosphate: step 4/9. This is 1-(5-phosphoribosyl)-5-[(5-phosphoribosylamino)methylideneamino] imidazole-4-carboxamide isomerase from Burkholderia lata (strain ATCC 17760 / DSM 23089 / LMG 22485 / NCIMB 9086 / R18194 / 383).